Reading from the N-terminus, the 346-residue chain is MVEKEEAGGGISEEEAAQYDRQIRLWGLEAQKRLRASRVLLVGLKGLGAEIAKNLILAGVKGLTMLDHEQVTPEDPGAQFLIRTGSVGRNRAEASLERAQNLNPMVDVKVDTEDIEKKPESFFTQFDAVCLTCCSRDVIVKVDQICHKNSIKFFTGDVFGYHGYTFANLGEHEFVEEKTKVAKVSQGVEDGPDTKRAKLDSSETTMVKKKVVFCPVKEALEVDWSSEKAKAALKRTTSDYFLLQVLLKFRTDKGRDPSSDTYEEDSELLLQIRNDVLDSLGISPDLLPEDFVRYCFSEMAPVCAVVGGILAQEIVKALSQRDPPHNNFFFFDGMKGNGIVECLGPK.

N-acetylmethionine is present on Met-1. At Val-2 the chain carries N-acetylvaline; in SUMO-activating enzyme subunit 1, N-terminally processed. Ser-12 carries the post-translational modification Phosphoserine. Lys-198 carries the N6-acetyllysine modification.

It belongs to the ubiquitin-activating E1 family. As to quaternary structure, heterodimer of SAE1 and UBA2/SAE2. The heterodimer corresponds to the two domains that are encoded on a single polypeptide chain in ubiquitin-activating enzyme E1. Interacts with UBE2I. As to expression, expression level increases during S phase and drops in G2 phase (at protein level).

It is found in the nucleus. The protein operates within protein modification; protein sumoylation. Functionally, the heterodimer acts as an E1 ligase for SUMO1, SUMO2, SUMO3, and probably SUMO4. It mediates ATP-dependent activation of SUMO proteins followed by formation of a thioester bond between a SUMO protein and a conserved active site cysteine residue on UBA2/SAE2. This is SUMO-activating enzyme subunit 1 (SAE1) from Homo sapiens (Human).